Here is a 262-residue protein sequence, read N- to C-terminus: Small ribosomal subunit protein uS2 (262 aa).

The protein belongs to the universal ribosomal protein uS2 family.

The sequence is that of Small ribosomal subunit protein uS2 from Roseiflexus sp. (strain RS-1).